The chain runs to 416 residues: Formyl-CoA:oxalate CoA-transferase (416 aa).

CoA is bound by residues 17–18, Arg38, 72–75, 96–98, His104, and 137–140; these read QS, LNTK, NFH, and KAYE. Residue Asp169 is the Nucleophile of the active site. 248–250 provides a ligand contact to substrate; the sequence is GGQ. 273 to 275 is a binding site for CoA; it reads QEQ.

It belongs to the CoA-transferase III family. Frc subfamily. In terms of assembly, homodimer.

The catalysed reaction is formyl-CoA + oxalate = oxalyl-CoA + formate. The protein operates within metabolic intermediate degradation; oxalate degradation; CO(2) and formate from oxalate: step 1/2. Involved in the catabolism of oxalate and in the adapatation to low pH via the induction of the oxalate-dependent acid tolerance response (ATR). Catalyzes the transfer of the CoA moiety from formyl-CoA to oxalate. The chain is Formyl-CoA:oxalate CoA-transferase from Escherichia coli O6:H1 (strain CFT073 / ATCC 700928 / UPEC).